Reading from the N-terminus, the 50-residue chain is Large ribosomal subunit protein bL33B (50 aa).

This sequence belongs to the bacterial ribosomal protein bL33 family.

The chain is Large ribosomal subunit protein bL33B from Mycoplasmopsis agalactiae (strain NCTC 10123 / CIP 59.7 / PG2) (Mycoplasma agalactiae).